We begin with the raw amino-acid sequence, 465 residues long: Presenilin spe-4 (465 aa).

At 1-18 (MDTLRSISSELVRSSQLR) the chain is on the cytoplasmic side. Residues 19–39 (WTLFSVIANMSLTLSIWIGVY) form a helical membrane-spanning segment. Residues 40-71 (NMEVNSELSKTYFLDPSFEQTTGNLLLDGFIN) lie on the Lumenal side of the membrane. A helical transmembrane segment spans residues 72–92 (GVGTILVLGCVSFIMLAFVLF). The Cytoplasmic segment spans residues 93-96 (DFRR). The chain crosses the membrane as a helical span at residues 97–117 (IVKAWLTLSCLLILFGVSAQT). Over 118 to 136 (LHDMFSQVFDQDDNNQYYM) the chain is Lumenal. Residues 137 to 157 (TIVLIVVPTVVYGFGGIYAFF) traverse the membrane as a helical segment. Residues 158 to 160 (SNS) lie on the Cytoplasmic side of the membrane. The chain crosses the membrane as a helical span at residues 161–181 (SLILHQIFVVTNCSLISVFYL). Over 182-190 (RVFPSKTTW) the chain is Lumenal. The helical transmembrane segment at 191–211 (FVLWIVLFWDLFAVLAPMGPL) threads the bilayer. Aspartate 200 is a catalytic residue. The Cytoplasmic portion of the chain corresponds to 212–389 (KKVQEKASDY…DALNDGEVLR (178 aa)). Residues 287–356 (INPDSVPTEH…SDISTAEECD (70 aa)) are disordered. The segment covering 326–350 (SETSSGSSNLSSSDSSTTVSTSDIS) has biased composition (low complexity). The helical transmembrane segment at 390–410 (LGFGDFVFYSLLIGQAAASGC) threads the bilayer. Aspartate 394 is an active-site residue. Position 411 (proline 411) is a topological domain, lumenal. A helical transmembrane segment spans residues 412 to 432 (FAVISAALGILFGLVVTLTVF). Residues 433–439 (STEESTT) lie on the Cytoplasmic side of the membrane. Residues 440-442 (PAL) carry the PAL motif. Residues 440–460 (PALPLPVICGTFCYFSSMFFW) constitute an intramembrane region (helical). The Cytoplasmic portion of the chain corresponds to 461 to 465 (EQLYG).

It belongs to the peptidase A22A family. Homodimer. Potential component of the gamma-secretase complex, a complex probably composed of the presenilin homodimer (sel-12, hop-1 or spe-4), nicastrin (aph-2), aph-1 and pen-2.

It localises to the endoplasmic reticulum membrane. It is found in the golgi apparatus. The protein resides in the cis-Golgi network membrane. Its function is as follows. Potential catalytic subunit of the gamma-secretase complex during spermatogenesis, an endoprotease complex that catalyzes the intramembrane cleavage of integral membrane proteins such as Notch receptors (lin-12 or glp-1). Involved in spermatid formation during meiosis II. May be required for proper localization of macromolecules that are subject to asymmetric partitioning during spermatogenesis. The chain is Presenilin spe-4 from Caenorhabditis elegans.